We begin with the raw amino-acid sequence, 291 residues long: Trimeric intracellular cation channel type B (291 aa).

Residues 1-15 are Lumenal-facing; it reads MESPWNELTLAFSRT. Residues 16–33 traverse the membrane as a helical segment; the sequence is SMFPFFDIAHYLVSVMAL. The Cytoplasmic portion of the chain corresponds to 34 to 47; the sequence is KHQPGAAALAWKNP. Residues 48–69 traverse the membrane as a helical segment; that stretch reads LSSWFTAMLHCFGGGILSCVLL. The Lumenal segment spans residues 70–80; sequence AEPPLRFLANN. Residues 81–100 form a helical membrane-spanning segment; it reads TNILLASSIWYIAFFCPCDL. The Cytoplasmic segment spans residues 101–103; that stretch reads ISQ. The helical transmembrane segment at 104 to 122 threads the bilayer; it reads AYSFLPVQLLAAGMKEVTR. Positions 118 and 122 each coordinate a 1,2-diacyl-sn-glycero-3-phospho-(1D-myo-inositol-4,5-bisphosphate). The Lumenal segment spans residues 123–138; the sequence is TWKIVGGVTHANSYYK. Residues 139-156 form a helical membrane-spanning segment; sequence NGWIVMIAVGWARGAGGS. At 157 to 179 the chain is on the cytoplasmic side; the sequence is IITNFEQLVKGCWKPEAEEWLKM. The chain crosses the membrane as a helical span at residues 180–196; the sequence is SYPAKVTLLGSVIFTFQ. The Lumenal segment spans residues 197–207; sequence QTKYLAISKHN. A helical transmembrane segment spans residues 208–225; it reads LMFLFTVFLVATKITMMI. At 226–291 the chain is on the cytoplasmic side; that stretch reads TKTALVPFAC…VKKKHSKKTE (66 aa). Positions 257 to 291 are disordered; sequence KSETKSSFNGTGSSTSKPVANASDKVKKKHSKKTE. The segment covering 261 to 274 has biased composition (polar residues); the sequence is KSSFNGTGSSTSKP. Ser-262 bears the Phosphoserine mark. The segment covering 282–291 has biased composition (basic residues); the sequence is VKKKHSKKTE.

The protein belongs to the TMEM38 family. In terms of assembly, homotrimer; conformation seems to be controled by binding to diacylglycerol (DAG).

It localises to the endoplasmic reticulum membrane. The catalysed reaction is K(+)(in) = K(+)(out). With respect to regulation, channel activity is activated by increased cytosolic Ca(2+) levels and blocked by luminal high Ca(2+) levels. Its function is as follows. Intracellular monovalent cation channel required for maintenance of rapid intracellular calcium release. Acts as a potassium counter-ion channel that functions in synchronization with calcium release from intracellular stores. Activated by increased cytosolic Ca(2+) levels. This chain is Trimeric intracellular cation channel type B (TMEM38B), found in Bos taurus (Bovine).